A 588-amino-acid chain; its full sequence is Secreted triacylglycerol lipase LIP1 (588 aa).

Positions 1–20 (MRFSGFVSGLGLGLLTAVSA) are cleaved as a signal peptide. The active-site Acyl-ester intermediate is the serine 258. Asparagine 400 carries an N-linked (GlcNAc...) asparagine glycan.

It belongs to the type-B carboxylesterase/lipase family.

It is found in the secreted. The catalysed reaction is a triacylglycerol + H2O = a diacylglycerol + a fatty acid + H(+). Secreted acylglycerol lipase required for efficient utilization of saturated triglyceride lipids. Is not involved in virulence. This is Secreted triacylglycerol lipase LIP1 from Gibberella zeae (strain ATCC MYA-4620 / CBS 123657 / FGSC 9075 / NRRL 31084 / PH-1) (Wheat head blight fungus).